The following is a 350-amino-acid chain: Renin receptor (350 aa).

The first 16 residues, 1-16, serve as a signal peptide directing secretion; that stretch reads MAVFVVLLALVAGVLG. At 17 to 302 the chain is on the extracellular side; it reads NEFSILKSPG…YNLAYKYNFE (286 aa). A helical membrane pass occupies residues 303–323; it reads YSVVFNMVLWIMIALALAVII. Over 324–350 the chain is Cytoplasmic; sequence TSYNIWNMDPGYDSIIYRMTNQKIRMD. The short motif at 346-350 is the Mediates retrograde transport to the ER element; the sequence is KIRMD.

Interacts with renin. Accessory component of the multisubunit proton-transporting vacuolar (V)-ATPase protein pump. Interacts (via N-terminus) with ATP6AP1 (via N-terminus). Interacts with ATP6V0D1; ATP6V0D1 is a V-ATPase complex subunit and the interaction promotes V-ATPase complex assembly. Interacts with TMEM9; TMEM9 is a V-ATPase assembly regulator and the interaction induces the interaction with ATP6V0D1. Interacts with VMA21 (via N-terminus); VMA21 is a V-ATPase accessory component. In terms of processing, phosphorylated. Post-translationally, proteolytically cleaved by a furin-like convertase in the trans-Golgi network to generate N- and C-terminal fragments. As to expression, expressed in brain, heart, placenta, liver, kidney and pancreas. Barely detectable in lung and skeletal muscles. In the kidney cortex it is restricted to the mesangium of glomeruli. In the coronary and kidney artery it is expressed in the subendothelium, associated to smooth muscles where it colocalizes with REN. Expressed in vascular structures and by syncytiotrophoblast cells in the mature fetal placenta.

The protein localises to the endoplasmic reticulum membrane. It is found in the lysosome membrane. The protein resides in the cytoplasmic vesicle. It localises to the autophagosome membrane. Its subcellular location is the cell projection. The protein localises to the dendritic spine membrane. It is found in the axon. The protein resides in the endosome membrane. It localises to the clathrin-coated vesicle membrane. Its subcellular location is the secretory vesicle. The protein localises to the synaptic vesicle membrane. Functionally, multifunctional protein which functions as a renin, prorenin cellular receptor and is involved in the assembly of the lysosomal proton-transporting V-type ATPase (V-ATPase) and the acidification of the endo-lysosomal system. May mediate renin-dependent cellular responses by activating ERK1 and ERK2. By increasing the catalytic efficiency of renin in AGT/angiotensinogen conversion to angiotensin I, may also play a role in the renin-angiotensin system (RAS). Through its function in V-type ATPase (v-ATPase) assembly and acidification of the lysosome it regulates protein degradation and may control different signaling pathways important for proper brain development, synapse morphology and synaptic transmission. This is Renin receptor from Homo sapiens (Human).